A 462-amino-acid chain; its full sequence is ATP synthase subunit beta (462 aa).

Residue 151–158 participates in ATP binding; that stretch reads GGAGVGKT.

It belongs to the ATPase alpha/beta chains family. As to quaternary structure, F-type ATPases have 2 components, CF(1) - the catalytic core - and CF(0) - the membrane proton channel. CF(1) has five subunits: alpha(3), beta(3), gamma(1), delta(1), epsilon(1). CF(0) has three main subunits: a(1), b(2) and c(9-12). The alpha and beta chains form an alternating ring which encloses part of the gamma chain. CF(1) is attached to CF(0) by a central stalk formed by the gamma and epsilon chains, while a peripheral stalk is formed by the delta and b chains.

It localises to the cell inner membrane. It catalyses the reaction ATP + H2O + 4 H(+)(in) = ADP + phosphate + 5 H(+)(out). Its function is as follows. Produces ATP from ADP in the presence of a proton gradient across the membrane. The catalytic sites are hosted primarily by the beta subunits. This Chlorobium limicola protein is ATP synthase subunit beta.